The chain runs to 139 residues: Nucleoside diphosphate kinase (139 aa).

The ATP site is built by lysine 11, phenylalanine 59, arginine 87, threonine 93, arginine 104, and asparagine 114. Histidine 117 acts as the Pros-phosphohistidine intermediate in catalysis.

This sequence belongs to the NDK family. In terms of assembly, homotetramer. It depends on Mg(2+) as a cofactor.

The protein resides in the cytoplasm. The catalysed reaction is a 2'-deoxyribonucleoside 5'-diphosphate + ATP = a 2'-deoxyribonucleoside 5'-triphosphate + ADP. The enzyme catalyses a ribonucleoside 5'-diphosphate + ATP = a ribonucleoside 5'-triphosphate + ADP. Functionally, major role in the synthesis of nucleoside triphosphates other than ATP. The ATP gamma phosphate is transferred to the NDP beta phosphate via a ping-pong mechanism, using a phosphorylated active-site intermediate. The protein is Nucleoside diphosphate kinase of Flavobacterium psychrophilum (strain ATCC 49511 / DSM 21280 / CIP 103535 / JIP02/86).